We begin with the raw amino-acid sequence, 274 residues long: Large ribosomal subunit protein uL2cz/uL2cy (274 aa).

A compositionally biased stretch (polar residues) spans 1 to 15 (MAINLYKTSTPSTRN). Disordered regions lie at residues 1 to 22 (MAIN…DSQV) and 225 to 274 (PVDH…RRSK).

It belongs to the universal ribosomal protein uL2 family. Part of the 50S ribosomal subunit.

The protein resides in the plastid. It is found in the chloroplast. The chain is Large ribosomal subunit protein uL2cz/uL2cy (rpl2-A) from Lobularia maritima (Sweet alyssum).